Consider the following 117-residue polypeptide: Early E3 13.3 kDa protein (117 aa).

In Canine adenovirus serotype 1 (strain Glaxo) (CAdV-1), this protein is Early E3 13.3 kDa protein.